Here is a 391-residue protein sequence, read N- to C-terminus: Digeranylgeranylglycerophospholipid reductase (391 aa).

The FAD site is built by Gly-18, Glu-37, Cys-48, Ala-49, Ala-51, Arg-98, Ala-122, Asp-279, Gly-291, and Ile-292.

The protein belongs to the geranylgeranyl reductase family. DGGGPL reductase subfamily. The cofactor is FAD.

The enzyme catalyses a 2,3-bis-O-phytanyl-sn-glycerol 1-phospholipid + 8 A = a 2,3-bis-O-(geranylgeranyl)-sn-glycerol 1-phospholipid + 8 AH2. It catalyses the reaction 2,3-bis-O-(phytanyl)-sn-glycerol 1-phosphate + 8 A = 2,3-bis-O-(geranylgeranyl)-sn-glycerol 1-phosphate + 8 AH2. It carries out the reaction CDP-2,3-bis-O-(geranylgeranyl)-sn-glycerol + 8 AH2 = CDP-2,3-bis-O-(phytanyl)-sn-glycerol + 8 A. The catalysed reaction is archaetidylserine + 8 AH2 = 2,3-bis-O-phytanyl-sn-glycero-3-phospho-L-serine + 8 A. Its pathway is membrane lipid metabolism; glycerophospholipid metabolism. Its function is as follows. Is involved in the reduction of 2,3-digeranylgeranylglycerophospholipids (unsaturated archaeols) into 2,3-diphytanylglycerophospholipids (saturated archaeols) in the biosynthesis of archaeal membrane lipids. Catalyzes the formation of archaetidic acid (2,3-di-O-phytanyl-sn-glyceryl phosphate) from 2,3-di-O-geranylgeranylglyceryl phosphate (DGGGP) via the hydrogenation of each double bond of the isoprenoid chains. Is also probably able to reduce double bonds of geranyl groups in CDP-2,3-bis-O-(geranylgeranyl)-sn-glycerol and archaetidylserine, thus acting at various stages in the biosynthesis of archaeal membrane lipids. This chain is Digeranylgeranylglycerophospholipid reductase, found in Methanocaldococcus jannaschii (strain ATCC 43067 / DSM 2661 / JAL-1 / JCM 10045 / NBRC 100440) (Methanococcus jannaschii).